The following is a 169-amino-acid chain: Ribosome maturation factor RimM (169 aa).

The PRC barrel domain occupies 97-169 (EDEVYFKDLI…KIVVDWEYDY (73 aa)).

This sequence belongs to the RimM family. In terms of assembly, binds ribosomal protein uS19.

The protein localises to the cytoplasm. In terms of biological role, an accessory protein needed during the final step in the assembly of 30S ribosomal subunit, possibly for assembly of the head region. Essential for efficient processing of 16S rRNA. May be needed both before and after RbfA during the maturation of 16S rRNA. It has affinity for free ribosomal 30S subunits but not for 70S ribosomes. This Francisella tularensis subsp. tularensis (strain WY96-3418) protein is Ribosome maturation factor RimM.